The sequence spans 473 residues: UDP-glycosyltransferase 91D2 (473 aa).

H26 (proton acceptor) is an active-site residue. H26 serves as a coordination point for an anthocyanidin. D121 acts as the Charge relay in catalysis. Positions 344, 346, 361, 366, and 369 each coordinate UDP-alpha-D-glucose. An an anthocyanidin-binding site is contributed by G384. D385 and Q386 together coordinate UDP-alpha-D-glucose.

The protein belongs to the UDP-glycosyltransferase family.

The enzyme catalyses steviolmonoside + UDP-alpha-D-glucose = steviolbioside + UDP + H(+). It carries out the reaction rubusoside + UDP-alpha-D-glucose = stevioside + UDP + H(+). It catalyses the reaction stevioside + UDP-alpha-D-glucose = rebaudioside E + UDP + H(+). The catalysed reaction is rebaudioside A + UDP-alpha-D-glucose = rebaudioside D + UDP + H(+). In terms of biological role, involved in the biosynthesis of steviol glycosides in leaves. Converts the mono-glycoside steviolmonoside to the bi-glycoside steviolbioside. Converts the bi-glycoside rubusoside to the tri-glycoside stevioside. Converts the tri-glycoside stevioside to the tetra-glycoside rebaudioside E. Converts the tetra-glycoside rebaudioside A to the penta-glycoside rebaudioside E. This chain is UDP-glycosyltransferase 91D2, found in Stevia rebaudiana (Stevia).